Here is a 217-residue protein sequence, read N- to C-terminus: Probable GTP-binding protein EngB (217 aa).

In terms of domain architecture, EngB-type G spans 44–217 (DRIEVCFAGR…TLRTIVATLG (174 aa)). GTP-binding positions include 52–59 (GRSNVGKS), 79–83 (GRTQE), 97–100 (DLPG), 164–167 (TKAD), and 198–200 (TSS). Positions 59 and 81 each coordinate Mg(2+).

It belongs to the TRAFAC class TrmE-Era-EngA-EngB-Septin-like GTPase superfamily. EngB GTPase family. Requires Mg(2+) as cofactor.

In terms of biological role, necessary for normal cell division and for the maintenance of normal septation. In Cereibacter sphaeroides (strain ATCC 17023 / DSM 158 / JCM 6121 / CCUG 31486 / LMG 2827 / NBRC 12203 / NCIMB 8253 / ATH 2.4.1.) (Rhodobacter sphaeroides), this protein is Probable GTP-binding protein EngB.